We begin with the raw amino-acid sequence, 72 residues long: Beta-defensin 104A (72 aa).

The N-terminal stretch at 1–22 (MRRLVLLLAISLLLYQDLPVRS) is a signal peptide. Disulfide bonds link Cys-30-Cys-57, Cys-37-Cys-51, and Cys-41-Cys-58.

The protein belongs to the beta-defensin family.

The protein localises to the secreted. Its function is as follows. Has antimicrobial activity. The sequence is that of Beta-defensin 104A (DEFB104A) from Gorilla gorilla gorilla (Western lowland gorilla).